Consider the following 374-residue polypeptide: Chaperone protein DnaJ (374 aa).

The J domain occupies 5 to 70; the sequence is DYYEVLGVSK…QKRAAYDQYG (66 aa). The CR-type zinc-finger motif lies at 132–210; the sequence is GTTVKIRVPT…CHGHGRVEET (79 aa). Zn(2+) is bound by residues Cys-145, Cys-148, Cys-162, Cys-165, Cys-184, Cys-187, Cys-198, and Cys-201. 4 CXXCXGXG motif repeats span residues 145–152, 162–169, 184–191, and 198–205; these read CKPCGGSG, CTTCGGHG, CPNCRGQG, and CKECHGHG.

Belongs to the DnaJ family. In terms of assembly, homodimer. Zn(2+) is required as a cofactor.

It localises to the cytoplasm. Participates actively in the response to hyperosmotic and heat shock by preventing the aggregation of stress-denatured proteins and by disaggregating proteins, also in an autonomous, DnaK-independent fashion. Unfolded proteins bind initially to DnaJ; upon interaction with the DnaJ-bound protein, DnaK hydrolyzes its bound ATP, resulting in the formation of a stable complex. GrpE releases ADP from DnaK; ATP binding to DnaK triggers the release of the substrate protein, thus completing the reaction cycle. Several rounds of ATP-dependent interactions between DnaJ, DnaK and GrpE are required for fully efficient folding. Also involved, together with DnaK and GrpE, in the DNA replication of plasmids through activation of initiation proteins. This chain is Chaperone protein DnaJ, found in Saccharophagus degradans (strain 2-40 / ATCC 43961 / DSM 17024).